A 197-amino-acid polypeptide reads, in one-letter code: Translation initiation factor IF-3 (197 aa).

The protein belongs to the IF-3 family. As to quaternary structure, monomer.

Its subcellular location is the cytoplasm. Its function is as follows. IF-3 binds to the 30S ribosomal subunit and shifts the equilibrium between 70S ribosomes and their 50S and 30S subunits in favor of the free subunits, thus enhancing the availability of 30S subunits on which protein synthesis initiation begins. This chain is Translation initiation factor IF-3, found in Prosthecochloris aestuarii (strain DSM 271 / SK 413).